We begin with the raw amino-acid sequence, 62 residues long: Cytotoxin-like basic protein (62 aa).

4 disulfide bridges follow: Cys-3-Cys-22, Cys-15-Cys-40, Cys-44-Cys-55, and Cys-56-Cys-61.

This sequence belongs to the three-finger toxin family. Short-chain subfamily. Orphan group XV sub-subfamily. In terms of tissue distribution, expressed by the venom gland.

The protein resides in the secreted. It localises to the target cell membrane. In terms of biological role, has low cytotoxic activity. This is Cytotoxin-like basic protein from Naja naja (Indian cobra).